Consider the following 264-residue polypeptide: S-adenosylmethionine decarboxylase proenzyme (264 aa).

The active-site Schiff-base intermediate with substrate; via pyruvic acid is S113. Position 113 is a pyruvic acid (Ser); by autocatalysis (S113). H118 serves as the catalytic Proton acceptor; for processing activity. C141 (proton donor; for catalytic activity) is an active-site residue.

The protein belongs to the prokaryotic AdoMetDC family. Type 2 subfamily. As to quaternary structure, heterooctamer of four alpha and four beta chains arranged as a tetramer of alpha/beta heterodimers. Requires pyruvate as cofactor. Is synthesized initially as an inactive proenzyme. Formation of the active enzyme involves a self-maturation process in which the active site pyruvoyl group is generated from an internal serine residue via an autocatalytic post-translational modification. Two non-identical subunits are generated from the proenzyme in this reaction, and the pyruvate is formed at the N-terminus of the alpha chain, which is derived from the carboxyl end of the proenzyme. The post-translation cleavage follows an unusual pathway, termed non-hydrolytic serinolysis, in which the side chain hydroxyl group of the serine supplies its oxygen atom to form the C-terminus of the beta chain, while the remainder of the serine residue undergoes an oxidative deamination to produce ammonia and the pyruvoyl group blocking the N-terminus of the alpha chain.

It catalyses the reaction S-adenosyl-L-methionine + H(+) = S-adenosyl 3-(methylsulfanyl)propylamine + CO2. The protein operates within amine and polyamine biosynthesis; S-adenosylmethioninamine biosynthesis; S-adenosylmethioninamine from S-adenosyl-L-methionine: step 1/1. In terms of biological role, catalyzes the decarboxylation of S-adenosylmethionine to S-adenosylmethioninamine (dcAdoMet), the propylamine donor required for the synthesis of the polyamines spermine and spermidine from the diamine putrescine. This chain is S-adenosylmethionine decarboxylase proenzyme, found in Pseudomonas aeruginosa (strain ATCC 15692 / DSM 22644 / CIP 104116 / JCM 14847 / LMG 12228 / 1C / PRS 101 / PAO1).